Reading from the N-terminus, the 181-residue chain is Adenine phosphoribosyltransferase (181 aa).

The protein belongs to the purine/pyrimidine phosphoribosyltransferase family. As to quaternary structure, homodimer.

The protein localises to the cytoplasm. It catalyses the reaction AMP + diphosphate = 5-phospho-alpha-D-ribose 1-diphosphate + adenine. It participates in purine metabolism; AMP biosynthesis via salvage pathway; AMP from adenine: step 1/1. Its function is as follows. Catalyzes a salvage reaction resulting in the formation of AMP, that is energically less costly than de novo synthesis. This is Adenine phosphoribosyltransferase from Colwellia psychrerythraea (strain 34H / ATCC BAA-681) (Vibrio psychroerythus).